The primary structure comprises 355 residues: UDP-N-acetylglucosamine--N-acetylmuramyl-(pentapeptide) pyrophosphoryl-undecaprenol N-acetylglucosamine transferase (355 aa).

Residues 12-14 (TGG), Asn-124, Arg-163, Ser-191, Ile-243, 262-267 (ALTVAE), and Gln-288 each bind UDP-N-acetyl-alpha-D-glucosamine.

It belongs to the glycosyltransferase 28 family. MurG subfamily.

It is found in the cell inner membrane. The catalysed reaction is di-trans,octa-cis-undecaprenyl diphospho-N-acetyl-alpha-D-muramoyl-L-alanyl-D-glutamyl-meso-2,6-diaminopimeloyl-D-alanyl-D-alanine + UDP-N-acetyl-alpha-D-glucosamine = di-trans,octa-cis-undecaprenyl diphospho-[N-acetyl-alpha-D-glucosaminyl-(1-&gt;4)]-N-acetyl-alpha-D-muramoyl-L-alanyl-D-glutamyl-meso-2,6-diaminopimeloyl-D-alanyl-D-alanine + UDP + H(+). It participates in cell wall biogenesis; peptidoglycan biosynthesis. Functionally, cell wall formation. Catalyzes the transfer of a GlcNAc subunit on undecaprenyl-pyrophosphoryl-MurNAc-pentapeptide (lipid intermediate I) to form undecaprenyl-pyrophosphoryl-MurNAc-(pentapeptide)GlcNAc (lipid intermediate II). This is UDP-N-acetylglucosamine--N-acetylmuramyl-(pentapeptide) pyrophosphoryl-undecaprenol N-acetylglucosamine transferase from Tolumonas auensis (strain DSM 9187 / NBRC 110442 / TA 4).